The chain runs to 346 residues: Probable disease resistance protein At5g45440 (346 aa).

One can recognise an NB-ARC domain in the interval 38–116 (KQVEDRVETD…AYAPRIWVSM (79 aa)). 85–92 (GEYGVGKT) is an ATP binding site. The disordered stretch occupies residues 315–346 (FDDGKANQNGSKDGKTDSVDNPNSEESKTKPL).

Possible disease resistance protein. This is Probable disease resistance protein At5g45440 from Arabidopsis thaliana (Mouse-ear cress).